We begin with the raw amino-acid sequence, 349 residues long: tRNA pseudouridine synthase D (349 aa).

Phenylalanine 27 lines the substrate pocket. Aspartate 80 functions as the Nucleophile in the catalytic mechanism. Substrate is bound at residue asparagine 129. In terms of domain architecture, TRUD spans 155 to 303; sequence GVPNYFGAQR…VEASRRAMLL (149 aa). Position 329 (phenylalanine 329) interacts with substrate.

The protein belongs to the pseudouridine synthase TruD family.

The catalysed reaction is uridine(13) in tRNA = pseudouridine(13) in tRNA. Its function is as follows. Responsible for synthesis of pseudouridine from uracil-13 in transfer RNAs. The chain is tRNA pseudouridine synthase D from Salmonella newport (strain SL254).